The chain runs to 500 residues: ATP synthase subunit beta (500 aa).

ATP is bound at residue 155–162 (GGAGVGKT).

The protein belongs to the ATPase alpha/beta chains family. In terms of assembly, F-type ATPases have 2 components, CF(1) - the catalytic core - and CF(0) - the membrane proton channel. CF(1) has five subunits: alpha(3), beta(3), gamma(1), delta(1), epsilon(1). CF(0) has three main subunits: a(1), b(2) and c(9-12). The alpha and beta chains form an alternating ring which encloses part of the gamma chain. CF(1) is attached to CF(0) by a central stalk formed by the gamma and epsilon chains, while a peripheral stalk is formed by the delta and b chains.

Its subcellular location is the cell inner membrane. It carries out the reaction ATP + H2O + 4 H(+)(in) = ADP + phosphate + 5 H(+)(out). Functionally, produces ATP from ADP in the presence of a proton gradient across the membrane. The catalytic sites are hosted primarily by the beta subunits. In Azobacteroides pseudotrichonymphae genomovar. CFP2, this protein is ATP synthase subunit beta.